Here is a 37-residue protein sequence, read N- to C-terminus: Desulforedoxin (37 aa).

Cys10, Cys13, Cys29, and Cys30 together coordinate Fe cation.

To the N-terminal section of desulfoferrodoxin. Homodimer. Requires Fe cation as cofactor.

Its function is as follows. Nonheme iron protein possibly involved in electron transport. The protein is Desulforedoxin (dsr) of Megalodesulfovibrio gigas (Desulfovibrio gigas).